Consider the following 273-residue polypeptide: Protein FAM210A (273 aa).

A disordered region spans residues 95–116 (VLSSSSTSQETPSEKKEEPDPL). The segment covering 106 to 116 (PSEKKEEPDPL) has biased composition (basic and acidic residues). The 113-residue stretch at 118–230 (DKSISLYQRF…GYMSTPPPVK (113 aa)) folds into the DUF1279 domain. A helical transmembrane segment spans residues 138–158 (LIPVHLITSGIWFGTFYYASI). Residues 233–272 (LQGRMEETKELISEKMEETKDRLTEKLQETKEKVSFKKKV) adopt a coiled-coil conformation. Positions 247 to 273 (KMEETKDRLTEKLQETKEKVSFKKKVE) are disordered.

It belongs to the FAM210 family. As to quaternary structure, interacts with ATAD3A.

The protein resides in the membrane. It is found in the mitochondrion. It localises to the cytoplasm. In terms of biological role, may play a role in the structure and strength of both muscle and bone. The polypeptide is Protein FAM210A (Fam210a) (Rattus norvegicus (Rat)).